Here is a 393-residue protein sequence, read N- to C-terminus: S-adenosylmethionine synthase 2 (393 aa).

A Mg(2+)-binding site is contributed by E9. H15 serves as a coordination point for ATP. A K(+)-binding site is contributed by E43. L-methionine-binding residues include E56 and Q99. Residues 167-169 (DGK), 235-238 (SGRF), D246, 252-253 (RK), A269, K273, and K277 contribute to the ATP site. D246 provides a ligand contact to L-methionine. K277 is a binding site for L-methionine.

Belongs to the AdoMet synthase family. In terms of assembly, homotetramer. The cofactor is Mn(2+). Mg(2+) is required as a cofactor. It depends on Co(2+) as a cofactor. K(+) serves as cofactor.

It localises to the cytoplasm. It carries out the reaction L-methionine + ATP + H2O = S-adenosyl-L-methionine + phosphate + diphosphate. It participates in amino-acid biosynthesis; S-adenosyl-L-methionine biosynthesis; S-adenosyl-L-methionine from L-methionine: step 1/1. Functionally, catalyzes the formation of S-adenosylmethionine from methionine and ATP. The reaction comprises two steps that are both catalyzed by the same enzyme: formation of S-adenosylmethionine (AdoMet) and triphosphate, and subsequent hydrolysis of the triphosphate. May be involved in the synthesis of betain in response to abiotic stress such as high salinity. This Beta vulgaris (Sugar beet) protein is S-adenosylmethionine synthase 2 (SAMS2).